The chain runs to 360 residues: C-C chemokine receptor-like 2 (360 aa).

Over 1–42 (MDNYTVAPDDEYDVLILDDYLDNSGPDQVPAPEFLSPQQVLQ) the chain is Extracellular. N-linked (GlcNAc...) asparagine glycosylation occurs at asparagine 3. Residues 43–63 (FCCAVFAVGLLDNVLAVFILV) form a helical membrane-spanning segment. At 64–73 (KYKGLKNLGN) the chain is on the cytoplasmic side. The helical transmembrane segment at 74–94 (IYFLNLALSNLCFLLPLPFWA) threads the bilayer. The Extracellular segment spans residues 95–109 (HTAAHGESPGNGTCK). N-linked (GlcNAc...) asparagine glycosylation is present at asparagine 105. The cysteines at positions 108 and 185 are disulfide-linked. A helical membrane pass occupies residues 110-130 (VLVGLHSSGLYSEVFSNILLL). Residues 131–141 (VQGYRVFSQGR) are Cytoplasmic-facing. Residues 142-162 (LASIFTTVSCGIVACILAWAM) traverse the membrane as a helical segment. Over 163-202 (ATALSLPESVFYEPRMERQKHKCAFGKPHFLPIEAPLWKY) the chain is Extracellular. The chain crosses the membrane as a helical span at residues 203 to 223 (VLTSKMIILVLAFPLLVFIIC). The Cytoplasmic portion of the chain corresponds to 224-243 (CRQLRRRQSFRERQYDLHKP). Residues 244–264 (ALVITGVFLLMWAPYNTVLFL) form a helical membrane-spanning segment. Residues 265 to 285 (SAFQEHLSLQDEKSSYHLDAS) lie on the Extracellular side of the membrane. A helical transmembrane segment spans residues 286–307 (VQVTQLVATTHCCVNPLLYLLL). Residues 308–360 (DRKAFMRYLRSLFPRCNDIPYQSSGGYQQAPPREGHGRPIELYSNLHQRQDII) are Cytoplasmic-facing.

The protein belongs to the G-protein coupled receptor 1 family. As to expression, expressed in macrophages, astrocytes, in glial cells. Constitutively expressed by mast cells. Detected in bronchial epithelium in OVA-induced airway inflammation. Up-regulated during dendritic cell (DC) maturation.

The protein resides in the cell membrane. Its function is as follows. Receptor for CCL19 and chemerin/RARRES2. Does not appear to be a signaling receptor, but may have a role in modulating chemokine-triggered immune responses by capturing and internalizing CCL19 or by presenting RARRES2 ligand to CMKLR1, a functional signaling receptor. Plays a critical role for the development of Th2 responses. This is C-C chemokine receptor-like 2 (Ccrl2) from Mus musculus (Mouse).